We begin with the raw amino-acid sequence, 1841 residues long: Sodium channel protein type 4 subunit alpha (1841 aa).

The Cytoplasmic segment spans residues 1 to 131; sequence MASSSLPTLV…RVAIKVLIHA (131 aa). A compositionally biased stretch (basic and acidic residues) spans 32–60; it reads AMEEEARLQRNKQMEIEEPERKPRSDLEA. Residues 32-63 are disordered; it reads AMEEEARLQRNKQMEIEEPERKPRSDLEAGKN. An I repeat occupies 113-448; it reads MLSPFSIVRR…VVAMAYAEQN (336 aa). The helical transmembrane segment at 132–150 threads the bilayer; the sequence is LFSMFIMITILTNCVFMTM. Over 151 to 157 the chain is Extracellular; sequence SNPPSWS. The chain crosses the membrane as a helical span at residues 158–178; that stretch reads KDVEYTFTGIYTFESLIKMLA. Topologically, residues 179–192 are cytoplasmic; it reads RGFCIDDFTFLRDP. Residues 193–210 form a helical membrane-spanning segment; it reads WNWLDFSVITMAYVTEFV. Residues 211 to 216 are Extracellular-facing; the sequence is DLGNIS. N-linked (GlcNAc...) asparagine glycosylation occurs at asparagine 214. The helical transmembrane segment at 217–233 threads the bilayer; sequence ALRTFRVLRALKTITVI. At 234–252 the chain is on the cytoplasmic side; sequence PGLKTIVGALIQSVKKLSD. Residues 253 to 272 form a helical membrane-spanning segment; that stretch reads VMILTVFCLSVFALVGLQLF. Topologically, residues 273 to 385 are extracellular; sequence MGNLRQKCVR…PNYGYTSYDT (113 aa). A disulfide bridge links cysteine 280 with cysteine 354. N-linked (GlcNAc...) asparagine glycosylation is found at asparagine 288, asparagine 291, asparagine 297, asparagine 303, asparagine 315, asparagine 327, and asparagine 356. A disulfide bridge links cysteine 363 with cysteine 369. The segment at residues 386–410 is an intramembrane region (pore-forming); that stretch reads FSWAFLALFRLMTQDYWENLFQLTL. The Extracellular portion of the chain corresponds to 411–417; that stretch reads RAAGKTY. A helical transmembrane segment spans residues 418–438; the sequence is MIFFVVIIFLGSFYLINLILA. Topologically, residues 439–572 are cytoplasmic; that stretch reads VVAMAYAEQN…HIILLIVMDP (134 aa). The interval 484-522 is disordered; that stretch reads ALEGGEEADGDPTHSKDCNGSLDTSGEKGPPRPSCSAES. The II repeat unit spans residues 554 to 826; the sequence is CCAPWVKFKH…QIAIGRIKWG (273 aa). A helical membrane pass occupies residues 573–591; sequence FVDLGITICIVLNTLFMAM. Residues 592-602 are Extracellular-facing; that stretch reads EHYPMTEHFDN. The helical transmembrane segment at 603-622 threads the bilayer; it reads VLSVGNLVFTGIFTAEMVLK. At 623–636 the chain is on the cytoplasmic side; the sequence is LIAMDPYEYFQQGW. Residues 637-656 form a helical membrane-spanning segment; that stretch reads NIFDSFIVTLSLVELGLANV. The Extracellular segment spans residues 657–658; that stretch reads QG. The helical transmembrane segment at 659–676 threads the bilayer; it reads LSVLRSFRLLRVFKLAKS. At 677 to 692 the chain is on the cytoplasmic side; sequence WPTLNMLIKIIGNSVG. A helical transmembrane segment spans residues 693–711; the sequence is ALGNLTLVLAIIVFIFAVV. Residues 712-740 lie on the Extracellular side of the membrane; sequence GMQLFGKSYKECVCKIASDCSLPRWHMHD. Cysteine 725 and cysteine 731 are oxidised to a cystine. The pore-forming intramembrane region spans 741–761; it reads FFHSFLIVFRILCGEWIETMW. Residues 762–772 are Extracellular-facing; that stretch reads DCMEVAGQAMC. Residues cysteine 763 and cysteine 772 are joined by a disulfide bond. The helical transmembrane segment at 773–791 threads the bilayer; that stretch reads LTVFLMVMVIGNLVVLNLF. The Cytoplasmic segment spans residues 792–1026; that stretch reads LALLLSSFSA…ACFKIVEHNW (235 aa). Disordered stretches follow at residues 854–896 and 925–983; these read EPGG…LTDG and SDLE…EGEL. Residues 867–887 are compositionally biased toward basic and acidic residues; that stretch reads EDEKKEPPPEDGNKELKDNHI. Composition is skewed to acidic residues over residues 925–941 and 969–983; these read SDLE…FSEP and EDPE…EGEL. The stretch at 1007 to 1320 is one III repeat; the sequence is RGKMWWTLRR…KKYYNAMKKL (314 aa). A helical transmembrane segment spans residues 1027-1044; the sequence is FETFIVFMILLSSGALAF. Residues 1045 to 1057 are Extracellular-facing; that stretch reads EDIYIEQRRVIRT. A helical membrane pass occupies residues 1058–1076; that stretch reads ILEYADKVFTYIFILEMLL. Topologically, residues 1077–1090 are cytoplasmic; it reads KWVAYGFKVYFTNA. A helical membrane pass occupies residues 1091-1109; sequence WCWLDFLIVDVSIISLVAN. Over 1110 to 1117 the chain is Extracellular; sequence WLGYSELG. Residues 1118–1136 traverse the membrane as a helical segment; it reads PIKSLRTLRALRPLRALSR. Topologically, residues 1137 to 1153 are cytoplasmic; the sequence is FEGMRVVVNALLGAIPS. The helical transmembrane segment at 1154 to 1173 threads the bilayer; the sequence is IMNVLLVCLIFWLIFSIMGV. Residues 1174 to 1224 are Extracellular-facing; sequence NLFAGKFYYCINTTTSERFDISVVNNKSECESLMYTGQVRWMNVKVNYDNV. Cysteines 1183 and 1203 form a disulfide. Residues asparagine 1185 and asparagine 1199 are each glycosylated (N-linked (GlcNAc...) asparagine). Positions 1225-1246 form an intramembrane region, pore-forming; that stretch reads GLGYLSLLQVATFKGWMDIMYA. Residues 1247-1263 are Extracellular-facing; the sequence is AVDSREKEEQPDYEVNL. Residues 1264 to 1285 traverse the membrane as a helical segment; it reads YMYLYFVIFIIFGSFFTLNLFI. Residues 1286–1348 are Cytoplasmic-facing; the sequence is GVIIDNFNQQ…MVYDFVTKQV (63 aa). An important for rapid channel inactivation region spans residues 1304 to 1306; that stretch reads IFM. An IV repeat occupies 1329-1627; it reads IPRPQNKIQG…WEKFDPDATQ (299 aa). Residues 1349–1366 form a helical membrane-spanning segment; the sequence is FDISIMILICLNMVTMMV. Residues 1367 to 1377 lie on the Extracellular side of the membrane; it reads ETDDQSQLKVD. Residues 1378–1396 traverse the membrane as a helical segment; it reads ILYNINMVFIIVFTGECVL. Residues 1397 to 1408 lie on the Cytoplasmic side of the membrane; the sequence is KMFALRHYYFTI. A helical membrane pass occupies residues 1409 to 1426; sequence GWNIFDFVVVILSIVGLA. Topologically, residues 1427–1439 are extracellular; the sequence is LSDLIQKYFVSPT. The helical transmembrane segment at 1440–1456 threads the bilayer; sequence LFRVIRLARIGRVLRLI. At 1457–1475 the chain is on the cytoplasmic side; it reads RGAKGIRTLLFALMMSLPA. Residues 1476–1493 traverse the membrane as a helical segment; that stretch reads LFNIGLLLFLVMFIYSIF. Residues 1494–1515 lie on the Extracellular side of the membrane; the sequence is GMSNFAYVKKESGIDDMFNFET. The pore-forming intramembrane region spans 1516-1538; the sequence is FGNSIICLFEITTSAGWDGLLNP. Topologically, residues 1539-1568 are extracellular; the sequence is ILNSGPPDCDPTLENPGTNIKGDCGNPSIG. Residues cysteine 1547 and cysteine 1562 are joined by a disulfide bond. The helical transmembrane segment at 1569–1591 threads the bilayer; that stretch reads ICFFCSYIIISFLIVVNMYIAII. Topologically, residues 1592-1841 are cytoplasmic; sequence LENFNVATEE…VRPGVKESLV (250 aa). The IQ domain occupies 1721–1750; the sequence is EEVCAIKIQRAYRRHLLQRSVKQASYMYRH. The segment covering 1776-1794 has biased composition (basic and acidic residues); it reads SEKEDNGVQSQGEKEKDST. A disordered region spans residues 1776–1841; that stretch reads SEKEDNGVQS…VRPGVKESLV (66 aa). A compositionally biased stretch (polar residues) spans 1801-1812; it reads TEVTAPSSSDTA. Over residues 1814-1826 the composition is skewed to pro residues; that stretch reads TPPPPSPPPPSSP.

The protein belongs to the sodium channel (TC 1.A.1.10) family. Nav1.4/SCN4A subfamily. The Nav1.4 voltage-gated sodium channel consists of an ion-conducting alpha subunit SCN4A which is functional on its own and a regulatory beta subunit SCN1B. SCN1B strongly enhances the presence of SCN4A at the cell surface. SCN1B is also required for rapid channel inactivation and recovery after inactivation. It prevents the decrease of channel activity in response to repetitive, high-frequency depolarizations. Interacts with the syntrophins SNTA1, SNTB1 and SNTB2 (via PDZ domain); probably links SCN4A to the actin cytoskeleton and the extracellular matrix via the dystrophin-associated protein complex and regulates its localization in muscle cells. Interacts with TMEM233; probable regulator of the channel. As to expression, detected in quadriceps muscle (at protein level). Detected in hind-limb skeletal muscles, but not in heart or brain. Detected at low levels in the myocardium. According to Pubme=26427606 detected also in brain.

Its subcellular location is the cell membrane. It catalyses the reaction Na(+)(in) = Na(+)(out). Its activity is regulated as follows. The channel is inhibited by tetrodotoxin. Pore-forming subunit of Nav1.4, a voltage-gated sodium (Nav) channel that directly mediates the depolarizing phase of action potentials in excitable membranes. Navs, also called VGSCs (voltage-gated sodium channels) or VDSCs (voltage-dependent sodium channels), operate by switching between closed and open conformations depending on the voltage difference across the membrane. In the open conformation they allow Na(+) ions to selectively pass through the pore, along their electrochemical gradient. The influx of Na+ ions provokes membrane depolarization, initiating the propagation of electrical signals throughout cells and tissues. Highly expressed in skeletal muscles, Nav1.4 generates the action potential crucial for muscle contraction. In Mus musculus (Mouse), this protein is Sodium channel protein type 4 subunit alpha.